The following is a 741-amino-acid chain: Polyribonucleotide nucleotidyltransferase (741 aa).

The Mg(2+) site is built by D489 and D495. The region spanning 556 to 615 (PKIDSIQIPVDKIKVVIGKGGETIDKIIAETGVTIDIDEEGLVQIFSSDQDAIDRAKTII) is the KH domain. Residues 625–693 (GEVYTVPVVR…EKGRVDASIK (69 aa)) enclose the S1 motif domain. The segment at 695–741 (LLPKPEKNEDGENGEEHRHCCCSHHKPDHHNESVEAPKKSDESETKE) is disordered. 2 stretches are compositionally biased toward basic and acidic residues: residues 698–713 (KPEKNEDGENGEEHRH) and 723–741 (HHNESVEAPKKSDESETKE).

Belongs to the polyribonucleotide nucleotidyltransferase family. The cofactor is Mg(2+).

The protein localises to the cytoplasm. The catalysed reaction is RNA(n+1) + phosphate = RNA(n) + a ribonucleoside 5'-diphosphate. Functionally, involved in mRNA degradation. Catalyzes the phosphorolysis of single-stranded polyribonucleotides processively in the 3'- to 5'-direction. This Streptococcus thermophilus (strain CNRZ 1066) protein is Polyribonucleotide nucleotidyltransferase.